The following is a 462-amino-acid chain: Exodeoxyribonuclease 7 large subunit (462 aa).

This sequence belongs to the XseA family. Heterooligomer composed of large and small subunits.

The protein resides in the cytoplasm. The catalysed reaction is Exonucleolytic cleavage in either 5'- to 3'- or 3'- to 5'-direction to yield nucleoside 5'-phosphates.. Its function is as follows. Bidirectionally degrades single-stranded DNA into large acid-insoluble oligonucleotides, which are then degraded further into small acid-soluble oligonucleotides. The protein is Exodeoxyribonuclease 7 large subunit of Pectobacterium atrosepticum (strain SCRI 1043 / ATCC BAA-672) (Erwinia carotovora subsp. atroseptica).